A 91-amino-acid chain; its full sequence is Large ribosomal subunit protein eL37 (91 aa).

Residues C19, C22, C34, and C37 each coordinate Zn(2+). The C4-type zinc finger occupies 19 to 37 (CRRCGKSSFHIQKKTCASC).

Belongs to the eukaryotic ribosomal protein eL37 family. The cofactor is Zn(2+).

Functionally, binds to the 23S rRNA. The protein is Large ribosomal subunit protein eL37 (rpl37) of Dictyostelium discoideum (Social amoeba).